Consider the following 268-residue polypeptide: MPKVIQSSMSDYRSVPYNQTPKSASERKRRNITNELINECKTIVQKSEEEHISQEVVLFRIVKLVTGVNLESNFSSNDLSESTRRKFDTESERRKVKTEREKIRRKKQDDCYAELKFFILNKQMGSYEQRLKLERITILEIIIDYIKHNSDLLYPETIPQILPLLAGKSTATCENKENEKPKTRMEVKDLFPRLTFQEVQESPTSTSPLLTFPCIPMIPTTQFNVLSNYNTVPSIFSAPLRFILPSLQILTPETSDEEENEETLDIIN.

The span at 1 to 23 shows a compositional bias: polar residues; it reads MPKVIQSSMSDYRSVPYNQTPKS. The interval 1–29 is disordered; the sequence is MPKVIQSSMSDYRSVPYNQTPKSASERKR. Positions 92-105 are basic motif; it reads ERRKVKTEREKIRR. In terms of domain architecture, bHLH spans 92 to 149; it reads ERRKVKTEREKIRRKKQDDCYAELKFFILNKQMGSYEQRLKLERITILEIIIDYIKHN. Positions 106–149 are helix-loop-helix motif; that stretch reads KKQDDCYAELKFFILNKQMGSYEQRLKLERITILEIIIDYIKHN.

The protein resides in the nucleus. In terms of biological role, probable transcription factor. Modulates lifespan and also recovery from the developmentally arrested larval state known as dauer, perhaps acting upstream of phosphatase PTEN/daf-18. Regulates expression of genes involved in cell division, cell-cycle regulation, and sexual reproduction, including daf-18. This Caenorhabditis elegans protein is Helix-loop-helix protein 25.